A 268-amino-acid polypeptide reads, in one-letter code: Phosphoethanolamine/phosphocholine phosphatase (268 aa).

Asp-32 functions as the Nucleophile in the catalytic mechanism. Mg(2+) contacts are provided by Asp-32 and Asp-34. The active-site Proton donor is the Asp-34. Substrate-binding residues include Asp-43 and Asp-123. Mg(2+) is bound at residue Asp-203.

The protein belongs to the HAD-like hydrolase superfamily. PHOSPHO family. Requires Mg(2+) as cofactor. In terms of tissue distribution, expressed at sites of mineralization in bone and cartilage. Highly expressed in hypertrophic chondrocytes compared to non-chondrogenic tissues. Expressed in chondrocytes but not in heart, liver, lung, kidney, spleen, muscle, adipose tissues not duodenum. In diaphyseal cortical bone, it is expressed in the osteoid layer of the periosteum, forming surfaces of growing osteons, and newly formed osteocytes, whereas it is not expressed in the endosteum and closed osteons. In growth plate cartilage, it is limited to the early hypertrophic chondrocytes and the ossification groove of Ranvier. Highly expressed on the mineralization surfaces of the cartilage remnants and trabecular bone within the primary spongiosa. Expressed in 17-day-old embryonic calvaria, the osteoid present on the intramembranous and periosteal bone surfaces but not in soft tissues examined.

The protein resides in the extracellular vesicle. It catalyses the reaction phosphoethanolamine + H2O = ethanolamine + phosphate. The enzyme catalyses phosphocholine + H2O = choline + phosphate. In terms of biological role, phosphatase that has a high activity toward phosphoethanolamine (PEA) and phosphocholine (PCho). Involved in the generation of inorganic phosphate for bone mineralization. The chain is Phosphoethanolamine/phosphocholine phosphatase (PHOSPHO1) from Gallus gallus (Chicken).